The sequence spans 483 residues: Shaker-related potassium channel tsha2 (483 aa).

Residues 1-165 (MTVVSCEIQD…YPESSGPARM (165 aa)) are Cytoplasmic-facing. Residues 166–186 (IAVVSVSVIVISIVIFCLETL) traverse the membrane as a helical segment. Topologically, residues 187-220 (PQFREDTSANLPLSNHHTTNGTTLHKKPNLFTDP) are extracellular. Residues 221–241 (FFMVETLCIVWFSFEFLVRFL) form a helical membrane-spanning segment. The Cytoplasmic portion of the chain corresponds to 242–252 (SCPSKPAFFKN). Cysteine 243 carries the S-palmitoyl cysteine lipid modification. The helical transmembrane segment at 253–273 (AMNSIDILAIAPYFITLGLEL) threads the bilayer. The Extracellular segment spans residues 274-324 (AEQQEAGSEQAMSLAILRVIRLVRVFRIFKLSRHSKGLQILGQTLHASISE). A helical; Voltage-sensor membrane pass occupies residues 325-345 (LGLLIFFLLIGVILFSSAVYF). Topologically, residues 346-353 (AEADDPES) are cytoplasmic. A helical transmembrane segment spans residues 354–374 (GFSSIPAAFWWAVVSMTTVGY). The Selectivity filter signature appears at 371-376 (TVGYGD). At 375–385 (GDMCPVTIGGK) the chain is on the extracellular side. Residues 386–406 (IVGSMCAIAGVLTIALPVPVI) traverse the membrane as a helical segment. The Cytoplasmic segment spans residues 407-483 (VSNFNYFYHR…EHYTGKLTDV (77 aa)). At tyrosine 426 the chain carries Phosphotyrosine. Threonine 430 carries the phosphothreonine modification. Residues 440-452 (EFKSTSDSRQSLT) are compositionally biased toward polar residues. The tract at residues 440–459 (EFKSTSDSRQSLTKSEDTEE) is disordered. The PDZ-binding signature appears at 481–483 (TDV).

This sequence belongs to the potassium channel family. A (Shaker) (TC 1.A.1.2) subfamily. In terms of assembly, heterotetramer of potassium channel proteins. Binds PDZ domains of dlg1, dlg2 and dlg4. Expressed in oligodendrocytes and astrocytes.

Its subcellular location is the membrane. Mediates the voltage-dependent potassium ion permeability of excitable membranes. Assuming opened or closed conformations in response to the voltage difference across the membrane, the protein forms a potassium-selective channel through which potassium ions may pass in accordance with their electrochemical gradient. The protein is Shaker-related potassium channel tsha2 of Oncorhynchus mykiss (Rainbow trout).